Here is a 135-residue protein sequence, read N- to C-terminus: Protein 4.7 (135 aa).

The sequence is that of Protein 4.7 from Escherichia coli (Bacteriophage T7).